A 107-amino-acid chain; its full sequence is MKGGLGNIMKQAQKMQEDMQKAQEEIAAMEVSGEAGAGMVKVTMTGRNEVRKVEIDPSLFEDDREMVEDLVAAAVNDAVQKVQRESQERMSGMAEGMGLPPGMKLPF.

Disordered stretches follow at residues 1-24 (MKGG…KAQE) and 82-107 (VQRE…KLPF). Positions 15–24 (MQEDMQKAQE) are enriched in basic and acidic residues.

Belongs to the YbaB/EbfC family. As to quaternary structure, homodimer.

The protein resides in the cytoplasm. It localises to the nucleoid. Binds to DNA and alters its conformation. May be involved in regulation of gene expression, nucleoid organization and DNA protection. The chain is Nucleoid-associated protein Hhal_0231 from Halorhodospira halophila (strain DSM 244 / SL1) (Ectothiorhodospira halophila (strain DSM 244 / SL1)).